We begin with the raw amino-acid sequence, 517 residues long: Cytochrome P450 78A5 (517 aa).

A helical transmembrane segment spans residues 20-40 (AFASVSLIIATVAFLLSPGGL). Cys-459 is a heme binding site.

It belongs to the cytochrome P450 family. The cofactor is heme. In terms of tissue distribution, expressed in the periphery of the shoot apical meristem and inflorescence meristem, on the adaxial sides of developing floral organs and in developing ovules in the region where the integuments emerge.

The protein localises to the membrane. In terms of biological role, plays a role in regulating directional growth at the meristem/organ boundary. Is required for the promotion of leaf and floral organ growth and for the prolongation of the plastochron. Promotes organ growth in a non-cell-autonomous manner and may generate a mobile growth signal distinct from the classical phytohormones that prevents premature arrest of proliferation, until the correct primordium size has been reached. Functions probably in association with CYP78A7 in regulating relative growth of the shoot apical meristem and plant organs. Is required locally in developing ovules to stimulates cell proliferation and promote seed growth. This Arabidopsis thaliana (Mouse-ear cress) protein is Cytochrome P450 78A5 (CYP78A5).